Reading from the N-terminus, the 263-residue chain is Interleukin-33 (263 aa).

Residues 1–17 (MKYSTTKIPPAKMNSSA) are compositionally biased toward polar residues. Residues 1–28 (MKYSTTKIPPAKMNSSADKALVKSPKLR) are disordered. Residues 1–65 (MKYSTTKIPP…CYFRKEITKR (65 aa)) are homeodomain-like HTH domain. An interaction with RELA region spans residues 62 to 103 (ITKRYSPRTAEKCRKQCLVFTACHQQLNKDFTSDVPMLQKCF).

It belongs to the IL-1 family. Highly divergent. As to quaternary structure, forms a 1:1:1 heterotrimeric complex with its primary high-affinity receptor IL1RL1 and the coreceptor IL1RAP. Interacts with cargo receptor TMED10; the interaction mediates the translocation from the cytoplasm into the ERGIC (endoplasmic reticulum-Golgi intermediate compartment) and thereby secretion. The full-length protein can be released from cells and is able to signal via the IL1RL1/ST2 receptor. However, proteolytic processing by CELA1, CSTG/cathepsin G and ELANE/neutrophil elastase produces C-terminal peptides that are more active than the unprocessed full-length protein. May also be proteolytically processed by calpains. Proteolytic cleavage mediated by apoptotic caspases including CASP3 and CASP7 results in IL33 inactivation. In vitro proteolytic cleavage by CASP1 was reported but could not be confirmed in vivo suggesting that IL33 is probably not a direct substrate for that caspase. Expressed in cultured umbilical artery smooth muscle cells after stimulation with IL1A and IL1B, and to a lesser extent with IFNG. Expressed in vasospastic cerebral arteries after subarachnoid hemorrhage.

The protein localises to the nucleus. It is found in the chromosome. The protein resides in the cytoplasm. Its subcellular location is the cytoplasmic vesicle. It localises to the secretory vesicle. The protein localises to the secreted. Cytokine that binds to and signals through the IL1RL1/ST2 receptor which in turn activates NF-kappa-B and MAPK signaling pathways in target cells. Involved in the maturation of Th2 cells inducing the secretion of T-helper type 2-associated cytokines. Also involved in activation of mast cells, basophils, eosinophils and natural killer cells. Acts as a chemoattractant for Th2 cells, and may function as an 'alarmin', that amplifies immune responses during tissue injury. Induces rapid UCP2-dependent mitochondrial rewiring that attenuates the generation of reactive oxygen species and preserves the integrity of Krebs cycle required for persistent production of itaconate and subsequent GATA3-dependent differentiation of inflammation-resolving alternatively activated macrophages. In terms of biological role, in quiescent endothelia the uncleaved form is constitutively and abundantly expressed, and acts as a chromatin-associated nuclear factor with transcriptional repressor properties, it may sequester nuclear NF-kappaB/RELA, lowering expression of its targets. This form is rapidely lost upon angiogenic or pro-inflammatory activation. This is Interleukin-33 (IL33) from Canis lupus familiaris (Dog).